Consider the following 414-residue polypeptide: Alanine--glyoxylate aminotransferase (414 aa).

The N-terminal 23 residues, 1–23 (MFRMLAKASVTLGSRAASWVRNM), are a transit peptide targeting the mitochondrion. Lysine 231 is subject to N6-(pyridoxal phosphate)lysine. Lysine 247 is subject to N6-acetyllysine; alternate. Position 247 is an N6-succinyllysine; alternate (lysine 247). An N6-acetyllysine mark is found at lysine 256 and lysine 334. A substrate-binding site is contributed by arginine 382. Positions 412-414 (NKL) match the Microbody targeting signal motif.

It belongs to the class-V pyridoxal-phosphate-dependent aminotransferase family. Homodimer. Requires pyridoxal 5'-phosphate as cofactor.

The protein resides in the peroxisome. The protein localises to the mitochondrion matrix. The catalysed reaction is L-serine + pyruvate = 3-hydroxypyruvate + L-alanine. It carries out the reaction glyoxylate + L-alanine = glycine + pyruvate. Its function is as follows. Catalyzes the transamination of glyoxylate to glycine and contributes to the glyoxylate detoxification. In terms of biological role, catalyzes the transamination between L-serine and pyruvate and weakly contributes to gluconeogenesis from the L-serine metabolism. In Rattus norvegicus (Rat), this protein is Alanine--glyoxylate aminotransferase.